Reading from the N-terminus, the 155-residue chain is 1,4-dihydroxy-2-naphthoyl-CoA hydrolase (155 aa).

Residue Asp22 is part of the active site.

It belongs to the 4-hydroxybenzoyl-CoA thioesterase family. DHNA-CoA hydrolase subfamily.

It carries out the reaction 1,4-dihydroxy-2-naphthoyl-CoA + H2O = 1,4-dihydroxy-2-naphthoate + CoA + H(+). It participates in cofactor biosynthesis; phylloquinone biosynthesis. It functions in the pathway quinol/quinone metabolism; 1,4-dihydroxy-2-naphthoate biosynthesis; 1,4-dihydroxy-2-naphthoate from chorismate: step 7/7. In terms of biological role, catalyzes the hydrolysis of 1,4-dihydroxy-2-naphthoyl-CoA (DHNA-CoA) to 1,4-dihydroxy-2-naphthoate (DHNA), a reaction involved in phylloquinone (vitamin K1) biosynthesis. This Prochlorococcus marinus (strain SARG / CCMP1375 / SS120) protein is 1,4-dihydroxy-2-naphthoyl-CoA hydrolase.